The chain runs to 273 residues: Protein FAM210A (273 aa).

The interval 95 to 116 (VLSSSSTSQETPSEKKEEPDPL) is disordered. Positions 106-116 (PSEKKEEPDPL) are enriched in basic and acidic residues. The region spanning 118-230 (DKSISLYQRF…GYMSTPPPVK (113 aa)) is the DUF1279 domain. The chain crosses the membrane as a helical span at residues 138-158 (LIPVHLITSGIWFGTFYYASI). The stretch at 233 to 272 (LQGRMEETKELISEKMEETKDRLTEKLQETKEKVSFKKKV) forms a coiled coil. The disordered stretch occupies residues 247-273 (KMEETKDRLTEKLQETKEKVSFKKKVE).

It belongs to the FAM210 family. Interacts with ATAD3A.

It is found in the membrane. The protein resides in the mitochondrion. It localises to the cytoplasm. In terms of biological role, may play a role in the structure and strength of both muscle and bone. The protein is Protein FAM210A (Fam210a) of Rattus norvegicus (Rat).